Reading from the N-terminus, the 388-residue chain is Chorismate synthase (388 aa).

NADP(+) is bound by residues R39 and R45. FMN is bound by residues 130–132 (RSS), 251–252 (NA), G296, 311–315 (KPIPT), and R337.

It belongs to the chorismate synthase family. In terms of assembly, homotetramer. The cofactor is FMNH2.

The catalysed reaction is 5-O-(1-carboxyvinyl)-3-phosphoshikimate = chorismate + phosphate. It functions in the pathway metabolic intermediate biosynthesis; chorismate biosynthesis; chorismate from D-erythrose 4-phosphate and phosphoenolpyruvate: step 7/7. Its function is as follows. Catalyzes the anti-1,4-elimination of the C-3 phosphate and the C-6 proR hydrogen from 5-enolpyruvylshikimate-3-phosphate (EPSP) to yield chorismate, which is the branch point compound that serves as the starting substrate for the three terminal pathways of aromatic amino acid biosynthesis. This reaction introduces a second double bond into the aromatic ring system. This is Chorismate synthase from Streptococcus pyogenes serotype M49 (strain NZ131).